The primary structure comprises 281 residues: 2-dehydro-3-deoxyphosphooctonate aldolase (281 aa).

Belongs to the KdsA family.

The protein localises to the cytoplasm. It carries out the reaction D-arabinose 5-phosphate + phosphoenolpyruvate + H2O = 3-deoxy-alpha-D-manno-2-octulosonate-8-phosphate + phosphate. It participates in carbohydrate biosynthesis; 3-deoxy-D-manno-octulosonate biosynthesis; 3-deoxy-D-manno-octulosonate from D-ribulose 5-phosphate: step 2/3. Its pathway is bacterial outer membrane biogenesis; lipopolysaccharide biosynthesis. The chain is 2-dehydro-3-deoxyphosphooctonate aldolase from Ectopseudomonas mendocina (strain ymp) (Pseudomonas mendocina).